Consider the following 205-residue polypeptide: MVRVKICGITNLEDALFSVESGADAVGFVFYPKSKRYISPEDARRISVELPPFVFRVGVFVNEEPEKILDVASYVQLNAVQLHGEEPIELCRKIAERILVIKAVGVSNERDMERALNYREFPILLDTKTPEYGGSGKTFDWSLILPYRDRFRYLVLSGGLNPENVRSAIDVVRPFAVDVSSGVEAFPGKKDHDSIKMFIKNAKGL.

This sequence belongs to the TrpF family. Homodimer.

The enzyme catalyses N-(5-phospho-beta-D-ribosyl)anthranilate = 1-(2-carboxyphenylamino)-1-deoxy-D-ribulose 5-phosphate. Its pathway is amino-acid biosynthesis; L-tryptophan biosynthesis; L-tryptophan from chorismate: step 3/5. The polypeptide is N-(5'-phosphoribosyl)anthranilate isomerase (trpF) (Thermotoga maritima (strain ATCC 43589 / DSM 3109 / JCM 10099 / NBRC 100826 / MSB8)).